A 358-amino-acid chain; its full sequence is MITLLKGRRKVDTIKVGILGYGLSGSVFHGPLLDVLDEYQISKIMTSRTEEVKRDFPDAEVVHELEEITNDPAIELVIVTTPSGLHYEHTMACIQAGKHVVMEKPMTATAEEGETLKRAADEKGVLLSVYHNRRWDNDFLTIKKLISEGSLEDINTYQVSYNRYRPEVQARWREKEGTATGTLYDLGSHIIDQTLHLFGMPKAVTANVMAQRENAETVDYFHLTLDYGKLQAILYGGSIVPANGPRYQIHGKDSSFIKYGIDGQEDALRAGRKPEDDSWGADVPEFYGKLTTIRGSDKKTETIPSVNGSYLTYYRKIAESIREGAALPVTAEEGINVIRIIEAAMESSKEKRTIMLEH.

It belongs to the Gfo/Idh/MocA family.

It carries out the reaction scyllo-inositol + NADP(+) = scyllo-inosose + NADPH + H(+). Functionally, catalyzes the reversible NADPH-dependent reduction of scyllo-inosose (SIS) to scyllo-inositol (SI). Cannot use NADH instead of NADPH. May be involved in reduction of not only SIS but also various oxidized compounds manifested upon stressful conditions. This Bacillus subtilis (strain 168) protein is scyllo-inositol 2-dehydrogenase (NADP(+)) IolW.